A 202-amino-acid polypeptide reads, in one-letter code: Superoxide dismutase [Cu-Zn], chloroplastic (202 aa).

A chloroplast-targeting transit peptide spans 1 to 48 (MASQTLVSPSPLSSHSLLRTSFSGVSVKLAPQFSTLATSNFKPLTVVA). 3 residues coordinate Cu cation: His94, His96, and His111. Cys105 and Cys194 form a disulfide bridge. Zn(2+) is bound by residues His111, His119, His128, and Asp131. Residue His168 coordinates Cu cation.

This sequence belongs to the Cu-Zn superoxide dismutase family. Homotetramer. Cu cation serves as cofactor. The cofactor is Zn(2+).

It localises to the plastid. The protein localises to the chloroplast. It carries out the reaction 2 superoxide + 2 H(+) = H2O2 + O2. In terms of biological role, destroys radicals which are normally produced within the cells and which are toxic to biological systems. This is Superoxide dismutase [Cu-Zn], chloroplastic (SODCP) from Pisum sativum (Garden pea).